Consider the following 656-residue polypeptide: DNA ligase (656 aa).

Residues 32–36 (DAVYD) and 81–82 (SL) each bind NAD(+). Residue K112 is the N6-AMP-lysine intermediate of the active site. Residues R133, E167, and K306 each coordinate NAD(+). C400, C403, C416, and C421 together coordinate Zn(2+). One can recognise a BRCT domain in the interval 577-656 (KSSSVFNNKT…ELLKRLKELD (80 aa)).

Belongs to the NAD-dependent DNA ligase family. LigA subfamily. The cofactor is Mg(2+). Mn(2+) serves as cofactor.

It catalyses the reaction NAD(+) + (deoxyribonucleotide)n-3'-hydroxyl + 5'-phospho-(deoxyribonucleotide)m = (deoxyribonucleotide)n+m + AMP + beta-nicotinamide D-nucleotide.. In terms of biological role, DNA ligase that catalyzes the formation of phosphodiester linkages between 5'-phosphoryl and 3'-hydroxyl groups in double-stranded DNA using NAD as a coenzyme and as the energy source for the reaction. It is essential for DNA replication and repair of damaged DNA. The polypeptide is DNA ligase (Helicobacter pylori (strain HPAG1)).